Consider the following 950-residue polypeptide: Protein translocase subunit SecA 1 (950 aa).

Residues Q83, 101–105, and D490 each bind ATP; that span reads GEGKT. A disordered region spans residues 864 to 950; that stretch reads EGGAGRKNAA…AKPPKSVKKR (87 aa). Residues 873 to 888 show a composition bias toward basic and acidic residues; it reads AAREEAPSRLRAKGIE.

Belongs to the SecA family. In terms of assembly, monomer and homodimer. Part of the essential Sec protein translocation apparatus which comprises SecA, SecYEG and auxiliary proteins SecDF. Other proteins may also be involved.

The protein localises to the cell membrane. The protein resides in the cytoplasm. The catalysed reaction is ATP + H2O + cellular proteinSide 1 = ADP + phosphate + cellular proteinSide 2.. Its function is as follows. Part of the Sec protein translocase complex. Interacts with the SecYEG preprotein conducting channel. Has a central role in coupling the hydrolysis of ATP to the transfer of proteins into and across the cell membrane, serving as an ATP-driven molecular motor driving the stepwise translocation of polypeptide chains across the membrane. This chain is Protein translocase subunit SecA 1, found in Mycobacterium ulcerans (strain Agy99).